An 861-amino-acid chain; its full sequence is Integrator complex subunit 6-like (861 aa).

The VWFA domain occupies 3-227 (ILLFLIDTSA…QCLESLVQKV (225 aa)). Phosphoserine is present on Ser-617.

This chain is Integrator complex subunit 6-like (Ints6l), found in Mus musculus (Mouse).